Consider the following 370-residue polypeptide: Putative agmatine deiminase (370 aa).

Cys361 functions as the Amidino-cysteine intermediate in the catalytic mechanism.

It belongs to the agmatine deiminase family.

The catalysed reaction is agmatine + H2O = N-carbamoylputrescine + NH4(+). In Shewanella baltica (strain OS155 / ATCC BAA-1091), this protein is Putative agmatine deiminase.